Consider the following 124-residue polypeptide: Large ribosomal subunit protein uL18 (124 aa).

The protein belongs to the universal ribosomal protein uL18 family. Part of the 50S ribosomal subunit; part of the 5S rRNA/L5/L18/L25 subcomplex. Contacts the 5S and 23S rRNAs.

Its function is as follows. This is one of the proteins that bind and probably mediate the attachment of the 5S RNA into the large ribosomal subunit, where it forms part of the central protuberance. In Orientia tsutsugamushi (strain Boryong) (Rickettsia tsutsugamushi), this protein is Large ribosomal subunit protein uL18.